The chain runs to 526 residues: ESX-1 secretion-associated protein EspB (526 aa).

Basic and acidic residues predominate over residues 1 to 23; the sequence is MSEELKYELPGLERKAHECESTR. 3 disordered regions span residues 1–35, 91–110, and 271–526; these read MSEE…KPDE, RQMN…VPDM, and QIQE…GKQQ. The span at 303–328 shows a compositional bias: gly residues; sequence GGPGGPGSGSGGGSGGGASGGSGGGT. Low complexity predominate over residues 335 to 362; sequence PSTDPSMSPMSTNSAGEEQSSGSPSSGG. The span at 363 to 387 shows a compositional bias: gly residues; it reads SSSGGSPSGGSPSGGGAPSSGGMPE. The span at 393 to 405 shows a compositional bias: low complexity; that stretch reads DMPGGPDIPGLDD. The segment covering 413-429 has biased composition (gly residues); that stretch reads AGGGGGGGVGGGGGGGM. Over residues 430–440 the composition is skewed to low complexity; sequence PAAPLGPAVGA. Residues 451–484 are compositionally biased toward gly residues; that stretch reads RGGGVGVPTGTGGGAGGMMGGGMGGMGAGHGQGQ. Basic and acidic residues predominate over residues 485 to 508; sequence GKEKKRDPKLAPDEDLYTEDRAHS.

It belongs to the EspB family.

The protein localises to the secreted. Its function is as follows. Involved in DNA conjugation, at least in the recipient strain. In Mycolicibacterium smegmatis (strain MKD8) (Mycobacterium smegmatis), this protein is ESX-1 secretion-associated protein EspB.